Here is a 91-residue protein sequence, read N- to C-terminus: Large ribosomal subunit protein bL31B (91 aa).

It belongs to the bacterial ribosomal protein bL31 family. Type B subfamily. In terms of assembly, part of the 50S ribosomal subunit.

In Neisseria gonorrhoeae (strain ATCC 700825 / FA 1090), this protein is Large ribosomal subunit protein bL31B.